The following is a 275-amino-acid chain: 2,3,4,5-tetrahydropyridine-2,6-dicarboxylate N-succinyltransferase (275 aa).

The substrate site is built by arginine 104 and aspartate 141.

This sequence belongs to the transferase hexapeptide repeat family. In terms of assembly, homotrimer.

It is found in the cytoplasm. The enzyme catalyses (S)-2,3,4,5-tetrahydrodipicolinate + succinyl-CoA + H2O = (S)-2-succinylamino-6-oxoheptanedioate + CoA. The protein operates within amino-acid biosynthesis; L-lysine biosynthesis via DAP pathway; LL-2,6-diaminopimelate from (S)-tetrahydrodipicolinate (succinylase route): step 1/3. The chain is 2,3,4,5-tetrahydropyridine-2,6-dicarboxylate N-succinyltransferase from Aeromonas salmonicida (strain A449).